The primary structure comprises 338 residues: Anthranilate phosphoribosyltransferase (338 aa).

Residues G81, 84–85 (GD), T89, 91–94 (NIST), 109–117 (KHGNRAQSS), and T121 each bind 5-phospho-alpha-D-ribose 1-diphosphate. G81 provides a ligand contact to anthranilate. S93 is a binding site for Mg(2+). Anthranilate is bound at residue N112. Residue R167 participates in anthranilate binding. Mg(2+) is bound by residues D225 and E226.

Belongs to the anthranilate phosphoribosyltransferase family. In terms of assembly, homodimer. Mg(2+) serves as cofactor.

The catalysed reaction is N-(5-phospho-beta-D-ribosyl)anthranilate + diphosphate = 5-phospho-alpha-D-ribose 1-diphosphate + anthranilate. Its pathway is amino-acid biosynthesis; L-tryptophan biosynthesis; L-tryptophan from chorismate: step 2/5. Functionally, catalyzes the transfer of the phosphoribosyl group of 5-phosphorylribose-1-pyrophosphate (PRPP) to anthranilate to yield N-(5'-phosphoribosyl)-anthranilate (PRA). The protein is Anthranilate phosphoribosyltransferase of Rhizobium rhizogenes (strain K84 / ATCC BAA-868) (Agrobacterium radiobacter).